Reading from the N-terminus, the 226-residue chain is Putative ABC transporter ATP-binding protein BH02760 (226 aa).

Positions 4–222 (IKFDKVTQVF…IPLVAIKEYI (219 aa)) constitute an ABC transporter domain. 35–42 (GANGSGKS) is a binding site for ATP.

This sequence belongs to the ABC transporter superfamily.

Its subcellular location is the cell inner membrane. Its function is as follows. Probably part of an ABC transporter complex. Responsible for energy coupling to the transport system. The sequence is that of Putative ABC transporter ATP-binding protein BH02760 from Bartonella henselae (strain ATCC 49882 / DSM 28221 / CCUG 30454 / Houston 1) (Rochalimaea henselae).